The primary structure comprises 219 residues: Vacuolar iron transporter homolog 2.1 (219 aa).

A compositionally biased stretch (polar residues) spans 1–15 (MTSNVQLSETNSPRN). Residues 1 to 26 (MTSNVQLSETNSPRNQKTRPRAEKEE) are disordered. T2 is modified (N-acetylthreonine). The Cytoplasmic portion of the chain corresponds to 2 to 37 (TSNVQLSETNSPRNQKTRPRAEKEEVDYMQRAQWLR). Residues 38 to 58 (AALLGANDGLVTVASLMMGVG) form a helical membrane-spanning segment. Residues 59–67 (SIKEDVKAM) are Vacuolar-facing. The helical transmembrane segment at 68 to 88 (LLVGFAGLVAGACSMAIGEFV) threads the bilayer. Over 89–133 (SVCTQRDIETAQMKRAIEHKTSLSAIDEQEEEEKKERLPNPGQAA) the chain is Cytoplasmic. A helical membrane pass occupies residues 134–154 (IASALAFSVGAAMPLLGAVFI). The Vacuolar segment spans residues 155–161 (ENHKVRM). A helical transmembrane segment spans residues 162 to 182 (VVVAVVATIALVVFGVTGAVL). Residues 183–193 (GKTSVVKSSVR) are Cytoplasmic-facing. The chain crosses the membrane as a helical span at residues 194-214 (VVIGGWMAMALTFGLTKFIGS). At 215 to 219 (AAMQI) the chain is on the vacuolar side.

The protein belongs to the CCC1 family. As to expression, highly expressed in roots. inflorescences and at lower levels in leaves.

The protein resides in the vacuole membrane. It carries out the reaction Fe(2+)(in) = Fe(2+)(out). Vacuolar iron transporter involved in the transfer of iron ions from the cytosol to the vacuole for intracellular iron storage. Involved in regulation of cellular iron homeostasis. Vacuolar iron storage is required for seed embryo and seedling development. The protein is Vacuolar iron transporter homolog 2.1 of Arabidopsis thaliana (Mouse-ear cress).